The chain runs to 88 residues: Long neurotoxin LNTX-2 (88 aa).

Positions 1–21 (MKTLLLTLVVVTIVCLDFGYA) are cleaved as a signal peptide. Disulfide bonds link Cys24–Cys42, Cys35–Cys63, Cys67–Cys78, and Cys79–Cys84.

The protein belongs to the three-finger toxin family. Long-chain subfamily. Type II alpha-neurotoxin sub-subfamily. As to expression, expressed by the venom gland.

It is found in the secreted. Functionally, binds with high affinity to muscular nicotinic acetylcholine receptors (nAChRs), whereas it binds with a low affinity to neuronal alpha-7/CHRNA7 nAChRs. The sequence is that of Long neurotoxin LNTX-2 from Demansia vestigiata (Lesser black whip snake).